Here is a 238-residue protein sequence, read N- to C-terminus: MNPEQFKTALAEKGIELSATQMKQFHDYFEMLVEWNEKMNLTAITDEKEVYLKHFYDSISATFYVDFTSFDSICDVGAGAGFPSIPIKICFPHLKVSIVDSLKKRMTFLDALAEKLGLTDVHFYHDRAETFGQNKAHREKYDLVTARAVARMSVLAELCIPLVKKGGSFLVMKAAQAEQELQIAEKAIKLFGGKVVDHFSFLLPVEESERNIYVINKTKETPNKYPRKPGTPNKLPIE.

S-adenosyl-L-methionine-binding positions include Gly77, Phe82, 128 to 129 (AE), and Arg147.

This sequence belongs to the methyltransferase superfamily. RNA methyltransferase RsmG family.

It localises to the cytoplasm. Functionally, specifically methylates the N7 position of guanine in position 535 of 16S rRNA. The protein is Ribosomal RNA small subunit methyltransferase G of Listeria welshimeri serovar 6b (strain ATCC 35897 / DSM 20650 / CCUG 15529 / CIP 8149 / NCTC 11857 / SLCC 5334 / V8).